We begin with the raw amino-acid sequence, 215 residues long: CUE domain-containing protein 4, mitochondrial (215 aa).

A mitochondrion-targeting transit peptide spans 1-29; the sequence is MQPEQLAGCAVVLTVTVLTLRWMFRVDKG. The region spanning 48 to 90 is the CUE domain; that stretch reads VNSEHVHLVKTVFPHLESSAIAYDLQKTKNVDATIENALRGQP. The tract at residues 109-191 is disordered; the sequence is GAGASSHSEE…KEREELFRKR (83 aa). Composition is skewed to low complexity over residues 122–140 and 153–165; these read SHEV…SLAS and SSRI…SSSS. The segment covering 180–191 has biased composition (basic and acidic residues); it reads SKKEREELFRKR.

It is found in the mitochondrion. This is CUE domain-containing protein 4, mitochondrial from Schizosaccharomyces pombe (strain 972 / ATCC 24843) (Fission yeast).